Here is a 66-residue protein sequence, read N- to C-terminus: DNA gyrase inhibitor YacG (66 aa).

The Zn(2+) site is built by Cys9, Cys12, Cys28, and Cys32. A disordered region spans residues 45–66 (HKIAGSEGSEDELYSGDLEPRH).

The protein belongs to the DNA gyrase inhibitor YacG family. Interacts with GyrB. Zn(2+) serves as cofactor.

Functionally, inhibits all the catalytic activities of DNA gyrase by preventing its interaction with DNA. Acts by binding directly to the C-terminal domain of GyrB, which probably disrupts DNA binding by the gyrase. The chain is DNA gyrase inhibitor YacG from Pseudomonas putida (strain ATCC 700007 / DSM 6899 / JCM 31910 / BCRC 17059 / LMG 24140 / F1).